The primary structure comprises 461 residues: CBL-interacting protein kinase 5 (461 aa).

The 255-residue stretch at 12–266 (YELGRMLGQG…VEKLVEHPWF (255 aa)) folds into the Protein kinase domain. ATP contacts are provided by residues 18–26 (LGQGTFAKV) and lysine 41. Aspartate 134 functions as the Proton acceptor in the catalytic mechanism. The activation loop stretch occupies residues 152–181 (DFGLSAFKECQKQDGLLHTTCGTPAYVAPE). Positions 300 to 334 (EGKAKEPASSLKPVSLNAFDIISLSKGFDLSGLFE) constitute an NAF domain. Residues 340–369 (KADSRFMTQKPASAIVSKLEQIAETESFKV) are PPI. Positions 440–461 (HPSLAQSSTLTQSSKSISRHAI) are disordered. Residues 442 to 455 (SLAQSSTLTQSSKS) are compositionally biased toward low complexity.

This sequence belongs to the protein kinase superfamily. CAMK Ser/Thr protein kinase family. SNF1 subfamily. It depends on Mn(2+) as a cofactor.

The catalysed reaction is L-seryl-[protein] + ATP = O-phospho-L-seryl-[protein] + ADP + H(+). It catalyses the reaction L-threonyl-[protein] + ATP = O-phospho-L-threonyl-[protein] + ADP + H(+). Functionally, CIPK serine-threonine protein kinases interact with CBL proteins. Binding of a CBL protein to the regulatory NAF domain of CIPK protein lead to the activation of the kinase in a calcium-dependent manner. This is CBL-interacting protein kinase 5 (CIPK5) from Oryza sativa subsp. japonica (Rice).